Reading from the N-terminus, the 204-residue chain is MGVLGGDAHVPIGSQVSPGSVVVTNNESFGHRKLLKGVDFLVRIKAFAFCLAVIVLLKNNVQTTVIAPGIVLQAKYNNTKAPVSLLVLASICCGYAFLQAVVSLLSFIRDKRVLNNTVLAWLTFLLDQVLTYLLLGSAAATAEAAYIAKRGEDKVQWKAVCGPFKRFCDHFAATVFLSFIAVIAFAVSAAISAYYLFRRSKGFK.

Residues 1-36 (MGVLGGDAHVPIGSQVSPGSVVVTNNESFGHRKLLK) are Cytoplasmic-facing. A helical transmembrane segment spans residues 37-57 (GVDFLVRIKAFAFCLAVIVLL). Topologically, residues 58-84 (KNNVQTTVIAPGIVLQAKYNNTKAPVS) are extracellular. N-linked (GlcNAc...) asparagine glycosylation occurs at asparagine 77. A helical membrane pass occupies residues 85-105 (LLVLASICCGYAFLQAVVSLL). Over 106 to 117 (SFIRDKRVLNNT) the chain is Cytoplasmic. A helical transmembrane segment spans residues 118–138 (VLAWLTFLLDQVLTYLLLGSA). Residues 139-170 (AATAEAAYIAKRGEDKVQWKAVCGPFKRFCDH) lie on the Extracellular side of the membrane. A helical membrane pass occupies residues 171–191 (FAATVFLSFIAVIAFAVSAAI). The Cytoplasmic portion of the chain corresponds to 192–204 (SAYYLFRRSKGFK).

This sequence belongs to the Casparian strip membrane proteins (CASP) family. Homodimer and heterodimers.

The protein localises to the cell membrane. The sequence is that of CASP-like protein 2U1 from Selaginella moellendorffii (Spikemoss).